A 188-amino-acid chain; its full sequence is Transcription antitermination protein NusB (188 aa).

Residues 154-188 are disordered; it reads RAANPGAVSGSDAPVAPWDDSEELPAEDEAEDSRP. Acidic residues predominate over residues 172–188; it reads DDSEELPAEDEAEDSRP.

It belongs to the NusB family.

In terms of biological role, involved in transcription antitermination. Required for transcription of ribosomal RNA (rRNA) genes. Binds specifically to the boxA antiterminator sequence of the ribosomal RNA (rrn) operons. The protein is Transcription antitermination protein NusB of Corynebacterium efficiens (strain DSM 44549 / YS-314 / AJ 12310 / JCM 11189 / NBRC 100395).